Reading from the N-terminus, the 122-residue chain is Large ribosomal subunit protein uL14 (122 aa).

It belongs to the universal ribosomal protein uL14 family. As to quaternary structure, part of the 50S ribosomal subunit. Forms a cluster with proteins L3 and L19. In the 70S ribosome, L14 and L19 interact and together make contacts with the 16S rRNA in bridges B5 and B8.

Its function is as follows. Binds to 23S rRNA. Forms part of two intersubunit bridges in the 70S ribosome. This is Large ribosomal subunit protein uL14 from Albidiferax ferrireducens (strain ATCC BAA-621 / DSM 15236 / T118) (Rhodoferax ferrireducens).